The following is a 439-amino-acid chain: uncharacterized protein (439 aa).

The 144-residue stretch at 65–208 folds into the DAGKc domain; that stretch reads TRPKRVFVLV…VYAFELTTEG (144 aa).

This is an uncharacterized protein from Caenorhabditis elegans.